The chain runs to 603 residues: Sulfoacetaldehyde acetyltransferase (603 aa).

The protein belongs to the TPP enzyme family. It depends on Mg(2+) as a cofactor. The cofactor is thiamine diphosphate.

The enzyme catalyses acetyl phosphate + sulfite + H(+) = sulfoacetaldehyde + phosphate. Catalyzes the degradation of sulfoacetaldehyde into sulfite and acetyl phosphate. Involved in sulfolactate degradation. The sequence is that of Sulfoacetaldehyde acetyltransferase from Roseovarius nubinhibens (strain ATCC BAA-591 / DSM 15170 / ISM).